The chain runs to 1054 residues: DIS3-like exonuclease 1 (1054 aa).

Residues 236 to 313 (AGIKSGRYIQ…WKGRTAALCE (78 aa)) enclose the CSD1 domain. The tract at residues 313 to 332 (ENDSEDKASGESPSEPMPTG) is disordered. The CSD2 domain maps to 365–431 (ILVTPWDYRI…GEIATILVEN (67 aa)). An RNB domain is found at 465–816 (RRDLRSTHLV…VHRLLMAAIS (352 aa)). Ser-989 carries the phosphoserine modification.

This sequence belongs to the RNR ribonuclease family. Component of the RNA exosome complex. The catalytically inactive RNA exosome core (Exo-9) complex is believed to associate with catalytic subunits EXOSC10, and DIS3 or DIS3L in cytoplasmic- and nuclear-specific RNA exosome complex forms. Mg(2+) is required as a cofactor.

It is found in the cytoplasm. The catalysed reaction is Exonucleolytic cleavage in the 3'- to 5'-direction to yield nucleoside 5'-phosphates.. In terms of biological role, catalytic component of the RNA exosome complex which has 3'-&gt;5' exoribonuclease activity and participates in a multitude of cellular RNA processing and degradation events. In the cytoplasm, the RNA exosome complex is involved in general mRNA turnover and specifically degrades inherently unstable mRNAs containing AU-rich elements (AREs) within their 3' untranslated regions, and in RNA surveillance pathways, preventing translation of aberrant mRNAs. It seems to be involved in degradation of histone mRNA. The chain is DIS3-like exonuclease 1 (Dis3l) from Rattus norvegicus (Rat).